A 316-amino-acid polypeptide reads, in one-letter code: Ribosomal protein L11 methyltransferase (316 aa).

S-adenosyl-L-methionine is bound by residues threonine 161, glycine 182, aspartate 204, and asparagine 249.

The protein belongs to the methyltransferase superfamily. PrmA family.

It is found in the cytoplasm. It carries out the reaction L-lysyl-[protein] + 3 S-adenosyl-L-methionine = N(6),N(6),N(6)-trimethyl-L-lysyl-[protein] + 3 S-adenosyl-L-homocysteine + 3 H(+). In terms of biological role, methylates ribosomal protein L11. This is Ribosomal protein L11 methyltransferase from Ruminiclostridium cellulolyticum (strain ATCC 35319 / DSM 5812 / JCM 6584 / H10) (Clostridium cellulolyticum).